The primary structure comprises 423 residues: Serine--tRNA ligase (423 aa).

230 to 232 is a binding site for L-serine; that stretch reads TSE. 261–263 contributes to the ATP binding site; sequence RSE. Glutamate 284 contacts L-serine. 348-351 serves as a coordination point for ATP; sequence EISS. Serine 384 is an L-serine binding site.

It belongs to the class-II aminoacyl-tRNA synthetase family. Type-1 seryl-tRNA synthetase subfamily. As to quaternary structure, homodimer. The tRNA molecule binds across the dimer.

It is found in the cytoplasm. The enzyme catalyses tRNA(Ser) + L-serine + ATP = L-seryl-tRNA(Ser) + AMP + diphosphate + H(+). The catalysed reaction is tRNA(Sec) + L-serine + ATP = L-seryl-tRNA(Sec) + AMP + diphosphate + H(+). The protein operates within aminoacyl-tRNA biosynthesis; selenocysteinyl-tRNA(Sec) biosynthesis; L-seryl-tRNA(Sec) from L-serine and tRNA(Sec): step 1/1. Catalyzes the attachment of serine to tRNA(Ser). Is also able to aminoacylate tRNA(Sec) with serine, to form the misacylated tRNA L-seryl-tRNA(Sec), which will be further converted into selenocysteinyl-tRNA(Sec). The polypeptide is Serine--tRNA ligase (Macrococcus caseolyticus (strain JCSC5402) (Macrococcoides caseolyticum)).